The sequence spans 204 residues: Large ribosomal subunit protein uL4 (204 aa).

The disordered stretch occupies residues 49–90; it reads KVKGMGEVSGTTKKPYRQKGTGSARQGSLRAPQYRTGGAVHG.

Belongs to the universal ribosomal protein uL4 family. As to quaternary structure, part of the 50S ribosomal subunit.

Its function is as follows. One of the primary rRNA binding proteins, this protein initially binds near the 5'-end of the 23S rRNA. It is important during the early stages of 50S assembly. It makes multiple contacts with different domains of the 23S rRNA in the assembled 50S subunit and ribosome. Forms part of the polypeptide exit tunnel. The protein is Large ribosomal subunit protein uL4 of Gluconacetobacter diazotrophicus (strain ATCC 49037 / DSM 5601 / CCUG 37298 / CIP 103539 / LMG 7603 / PAl5).